A 177-amino-acid chain; its full sequence is Interleukin-1 receptor antagonist protein (177 aa).

A signal peptide spans 1–25; sequence MEICRGLRSHLITLLLFLFHSETIC. An intrachain disulfide couples C91 to C141. N-linked (GlcNAc...) asparagine glycosylation occurs at N109.

It belongs to the IL-1 family. The intracellular form of IL1RN is predominantly expressed in epithelial cells.

The protein localises to the secreted. It localises to the cytoplasm. Its function is as follows. Anti-inflammatory antagonist of interleukin-1 family of proinflammatory cytokines such as interleukin-1beta/IL1B and interleukin-1alpha/IL1A. Protects from immune dysregulation and uncontrolled systemic inflammation triggered by IL1 for a range of innate stimulatory agents such as pathogens. This Homo sapiens (Human) protein is Interleukin-1 receptor antagonist protein (IL1RN).